Consider the following 655-residue polypeptide: p-hydroxybenzoic acid efflux pump subunit AaeB (655 aa).

The next 11 membrane-spanning stretches (helical) occupy residues 13 to 33 (FAVKLATAIVLALFVGFHFQL), 38 to 58 (WAVLTAAIVAAGPAFAAGGEP), 69 to 89 (LRIIGTFIGCIAGLVIIIAMI), 93 to 113 (LLMILVCCIWAGFCTWISSLV), 121 to 141 (WGLAGYTALIIVITIQPEPLL), 152 to 172 (EIVIGIVCAIMADLLFSPRSI), 370 to 390 (LFWLWTGWTSGSGAMVMIAVV), 407 to 427 (FIYGTLAALPLGLLYFLVIIP), 431 to 451 (QSMLLLCISLAVLGFFLGIEV), 459 to 479 (MGALASTINIIVLDNPMTFHF), and 482 to 502 (FLDSALGQIVGCVLAFTVILL).

The protein belongs to the aromatic acid exporter ArAE (TC 2.A.85) family.

It localises to the cell inner membrane. Its function is as follows. Forms an efflux pump with AaeA. Could function as a metabolic relief valve, allowing to eliminate certain compounds when they accumulate to high levels in the cell. In Shigella sonnei (strain Ss046), this protein is p-hydroxybenzoic acid efflux pump subunit AaeB.